Reading from the N-terminus, the 184-residue chain is Large ribosomal subunit protein uL6 (184 aa).

Belongs to the universal ribosomal protein uL6 family. In terms of assembly, part of the 50S ribosomal subunit.

In terms of biological role, this protein binds to the 23S rRNA, and is important in its secondary structure. It is located near the subunit interface in the base of the L7/L12 stalk, and near the tRNA binding site of the peptidyltransferase center. This is Large ribosomal subunit protein uL6 from Thermosipho africanus (strain TCF52B).